Reading from the N-terminus, the 354-residue chain is P2Y purinoceptor 13 (354 aa).

The Extracellular portion of the chain corresponds to 1–49; the sequence is MTAAIRRQRELSILPKVTLEAMNTTVMQGFNRSERCPRDTRIVQLVFPA. 2 N-linked (GlcNAc...) asparagine glycosylation sites follow: Asn-23 and Asn-31. The chain crosses the membrane as a helical span at residues 50–70; that stretch reads LYTVVFLTGILLNTLALWVFV. The Cytoplasmic segment spans residues 71–77; sequence HIPSSST. Residues 78–98 form a helical membrane-spanning segment; it reads FIIYLKNTLVADLIMTLMLPF. Residues 99-117 are Extracellular-facing; sequence KILSDSHLAPWQLRAFVCR. Cysteines 116 and 194 form a disulfide. The chain crosses the membrane as a helical span at residues 118–138; sequence FSSVIFYETMYVGIVLLGLIA. Over 139 to 161 the chain is Cytoplasmic; that stretch reads FDRFLKIIRPLRNIFLKKPVFAK. A helical membrane pass occupies residues 162–182; that stretch reads TVSIFIWFFLFFISLPNTILS. Residues 183 to 211 are Extracellular-facing; the sequence is NKEATPSSVKKCASLKGPLGLKWHQMVNN. Residues 212-232 form a helical membrane-spanning segment; that stretch reads ICQFIFWTVFILMLVFYVVIA. The Cytoplasmic portion of the chain corresponds to 233-252; that stretch reads KKVYDSYRKSKSKDRKNNKK. The chain crosses the membrane as a helical span at residues 253 to 273; that stretch reads LEGKVFVVVAVFFVCFAPFHF. Residues 274 to 300 are Extracellular-facing; the sequence is ARVPYTHSQTNNKTDCRLQNQLFIAKE. Asn-285 carries an N-linked (GlcNAc...) asparagine glycan. Residues 301–321 form a helical membrane-spanning segment; sequence TTLFLAATNICMDPLIYIFLC. The Cytoplasmic portion of the chain corresponds to 322–333; sequence KKFTEKLPCMQG. Residues 335-354 form a disordered region; it reads KTTASSQENHSSQTDNITLG.

It belongs to the G-protein coupled receptor 1 family. Strong expression in spleen and adult brain. Lower expression in placenta, lung, liver, spinal cord, thymus, small intestine, uterus, stomach, testis, fetal brain, and adrenal gland. Not detected in pancreas, heart, kidney, skeletal muscle, ovary or fetal aorta. Clearly detected in lymph node and bone marrow, weakly detected in peripheral blood mononuclear cells (PBMC) and in peripheral blood leukocytes (PBL), but not detected in polymorphonuclear cells (PMN). In the brain, detected in all brain regions examined.

Its subcellular location is the cell membrane. Its function is as follows. Receptor for ADP. Coupled to G(i)-proteins. May play a role in hematopoiesis and the immune system. This is P2Y purinoceptor 13 (P2RY13) from Homo sapiens (Human).